A 512-amino-acid polypeptide reads, in one-letter code: Cytochrome P450 monooxygenase paxQ (512 aa).

2 helical membrane-spanning segments follow: residues 3–23 (FVLS…LVSI) and 35–55 (LQIP…ISAL). Cys-453 is a binding site for heme.

It belongs to the cytochrome P450 family. Heme is required as a cofactor.

Its subcellular location is the membrane. It participates in secondary metabolite biosynthesis. Its function is as follows. Cytochrome P450 monooxygenase; part of the gene cluster that mediates the biosynthesis of paxilline, a mycotoxin that acts as an inhibitor of mammalian maxi-K channels. PaxG, the geranylgeranyl diphosphate (GGPP) synthase is proposed to catalyze the first step in paxilline biosynthesis. Condensation of indole-3-glycerol phosphate with GGPP by paxC then forms 3-geranylgeranylindole (3-GGI), followed by epoxidation and cyclization of this intermediate (by paxM and paxB) to form paspaline. Paspaline is subsequently converted to 13-desoxypaxilline by paxP, the latter being then converted to paxilline by paxQ. Finally paxilline can be mono- and di-prenylated by paxD. PaxQ can also utilized beta-paxitriol and alpha-PC-M6 as substrates converting them to alpha-paxitriol. The protein is Cytochrome P450 monooxygenase paxQ of Penicillium paxilli.